Here is a 124-residue protein sequence, read N- to C-terminus: Ribonuclease pancreatic (124 aa).

Positions 1 to 13 are enriched in basic and acidic residues; the sequence is KESAAAKFERQHM. The interval 1–24 is disordered; sequence KESAAAKFERQHMDSSTSSASSSN. The substrate site is built by lysine 7 and arginine 10. The active-site Proton acceptor is histidine 12. 4 disulfide bridges follow: cysteine 26–cysteine 84, cysteine 40–cysteine 95, cysteine 58–cysteine 110, and cysteine 65–cysteine 72. An N-linked (GlcNAc...) asparagine; partial glycan is attached at asparagine 34. Substrate-binding positions include 41–45, lysine 66, and arginine 85; that span reads KPVNT. Histidine 119 acts as the Proton donor in catalysis.

It belongs to the pancreatic ribonuclease family. Monomer. Interacts with and forms tight 1:1 complexes with RNH1. Dimerization of two such complexes may occur. Interaction with RNH1 inhibits this protein. As to expression, pancreas.

The protein localises to the secreted. It catalyses the reaction an [RNA] containing cytidine + H2O = an [RNA]-3'-cytidine-3'-phosphate + a 5'-hydroxy-ribonucleotide-3'-[RNA].. The catalysed reaction is an [RNA] containing uridine + H2O = an [RNA]-3'-uridine-3'-phosphate + a 5'-hydroxy-ribonucleotide-3'-[RNA].. Endonuclease that catalyzes the cleavage of RNA on the 3' side of pyrimidine nucleotides. Acts on single-stranded and double-stranded RNA. This chain is Ribonuclease pancreatic (RNASE1), found in Aepyceros melampus (Impala).